Reading from the N-terminus, the 265-residue chain is Phosphate import ATP-binding protein PstB 1 (265 aa).

The 241-residue stretch at Leu-20–Ile-260 folds into the ABC transporter domain. Gly-53 to Ser-60 lines the ATP pocket.

The protein belongs to the ABC transporter superfamily. Phosphate importer (TC 3.A.1.7) family. The complex is composed of two ATP-binding proteins (PstB), two transmembrane proteins (PstC and PstA) and a solute-binding protein (PstS).

It is found in the cell membrane. The enzyme catalyses phosphate(out) + ATP + H2O = ADP + 2 phosphate(in) + H(+). Its function is as follows. Part of the ABC transporter complex PstSACB involved in phosphate import. Responsible for energy coupling to the transport system. This chain is Phosphate import ATP-binding protein PstB 1, found in Lactobacillus acidophilus (strain ATCC 700396 / NCK56 / N2 / NCFM).